The primary structure comprises 193 residues: uncharacterized protein (193 aa).

A substrate-binding site is contributed by arginine 8. The Tele-phosphohistidine intermediate role is filled by histidine 9. Positions 15, 21, and 58 each coordinate substrate. Glutamate 82 functions as the Proton donor/acceptor in the catalytic mechanism. Histidine 139 is a binding site for substrate.

The protein belongs to the phosphoglycerate mutase family. GpmB subfamily.

Its function is as follows. Phosphatase with broad substrate specificity. Does not have phosphoglycerate mutase activity. This is an uncharacterized protein from Bacillus subtilis (strain 168).